We begin with the raw amino-acid sequence, 447 residues long: Exodeoxyribonuclease 7 large subunit (447 aa).

This sequence belongs to the XseA family. As to quaternary structure, heterooligomer composed of large and small subunits.

It localises to the cytoplasm. The catalysed reaction is Exonucleolytic cleavage in either 5'- to 3'- or 3'- to 5'-direction to yield nucleoside 5'-phosphates.. Bidirectionally degrades single-stranded DNA into large acid-insoluble oligonucleotides, which are then degraded further into small acid-soluble oligonucleotides. In Geobacter sulfurreducens (strain ATCC 51573 / DSM 12127 / PCA), this protein is Exodeoxyribonuclease 7 large subunit.